Consider the following 401-residue polypeptide: NALCN channel auxiliary factor 2 (401 aa).

The helical transmembrane segment at 42–62 (LASLLFFTALLSDHLWLCAGG) threads the bilayer. 4 N-linked (GlcNAc...) asparagine glycosylation sites follow: N77, N97, N153, and N178. A helical membrane pass occupies residues 362–382 (LCVLVLFLLHTFISITTLQHC).

Belongs to the NALF family.

It localises to the membrane. Its function is as follows. Probable component of the NALCN channel complex, a channel that regulates the resting membrane potential and controls neuronal excitability. This Danio rerio (Zebrafish) protein is NALCN channel auxiliary factor 2 (nalf2).